A 193-amino-acid chain; its full sequence is Recombination protein RecR (193 aa).

The C4-type; degenerate zinc finger occupies 61–76; sequence CASCNALSETEVSEIC. One can recognise a Toprim domain in the interval 84-170; it reads SQLCMVLHPR…TFTKIAQGVP (87 aa).

Belongs to the RecR family.

In terms of biological role, may play a role in DNA repair. It seems to be involved in an RecBC-independent recombinational process of DNA repair. It may act with RecF and RecO. In Helicobacter pylori (strain J99 / ATCC 700824) (Campylobacter pylori J99), this protein is Recombination protein RecR.